The following is a 576-amino-acid chain: MAASETVRLRLQFDYPPPATPHCTAFWLLVDLNRCRVVTDLISLIRQRFGFSSGAFLGLYLEGGLLPPAESARLVRDNDCLRVKLEERGVAENSVVISNGDINLSLRKAKKRAFQLEEGEETEPDCKYSKKHWKSRENNNNNEKVLDLEPKAVTDQTVSKKNKRKNKATCGTVGDDNEEAKRKSPKKKEKCEYKKKAKNPKSPKVQAVKDWANQRCSSPKGSARNSLVKAKRKGSVSVCSKESPSSSSESESCDESISDGPSKVTLEARNSSEKLPTELSKEEPSTKNTTADKLAIKLGFSLTPSKGKTSGTTSSSSDSSAESDDQCLMSSSTPECAAGFLKTVGLFAGRGRPGPGLSSQTAGAAGWRRSGSNGGGQAPGASPSVSLPASLGRGWGREENLFSWKGAKGRGMRGRGRGRGHPVSCVVNRSTDNQRQQQLNDVVKNSSTIIQNPVETPKKDYSLLPLLAAAPQVGEKIAFKLLELTSSYSPDVSDYKEGRILSHNPETQQVDIEILSSLPALREPGKFDLVYHNENGAEVVEYAVTQESKITVFWKELIDPRLIIESPSNTSSTEPA.

Residue S105 is modified to Phosphoserine. T122 carries the post-translational modification Phosphothreonine. Disordered stretches follow at residues 125 to 330 (DCKY…CLMS) and 352 to 389 (RPGP…SLPA). Residues K127, K151, and K160 each participate in a glycyl lysine isopeptide (Lys-Gly) (interchain with G-Cter in SUMO2) cross-link. Phosphoserine; by VRK1 and VRK2 is present on S184. Residues K204 and K209 each participate in a glycyl lysine isopeptide (Lys-Gly) (interchain with G-Cter in SUMO2) cross-link. Residues 214–225 (QRCSSPKGSARN) are compositionally biased toward polar residues. The 1-1 repeat unit spans residues 223–226 (ARNS). The segment at 223–271 (ARNSLVKAKRKGSVSVCSKESPSSSSESESCDESISDGPSKVTLEARNS) is 2 X 4 AA repeats of A-R-N-S. Residues 235-250 (SVSVCSKESPSSSSES) show a composition bias toward low complexity. 5 positions are modified to phosphoserine: S248, S250, S256, S271, and S272. One copy of the 1-2 repeat lies at 268–271 (ARNS). The segment covering 270 to 285 (NSSEKLPTELSKEEPS) has biased composition (basic and acidic residues). Residues K274 and K281 each participate in a glycyl lysine isopeptide (Lys-Gly) (interchain with G-Cter in SUMO2) cross-link. T290 is subject to Phosphothreonine. Glycyl lysine isopeptide (Lys-Gly) (interchain with G-Cter in SUMO2) cross-links involve residues K293 and K297. The residue at position 301 (S301) is a Phosphoserine. Over residues 301 to 320 (SLTPSKGKTSGTTSSSSDSS) the composition is skewed to low complexity. The residue at position 303 (T303) is a Phosphothreonine. The 2-1 repeat unit spans residues 386–389 (SLPA). The tract at residues 386-520 (SLPASLGRGW…DIEILSSLPA (135 aa)) is 2 X 4 AA repeats of S-L-P-A. Residues 392–420 (GRGWGREENLFSWKGAKGRGMRGRGRGRG) are required for interaction with SMN. S403 carries the phosphoserine modification. A run of 4 repeats spans residues 413 to 414 (RG), 415 to 416 (RG), 417 to 418 (RG), and 419 to 420 (RG). The interval 413 to 420 (RGRGRGRG) is 4 X 2 AA tandem repeats of R-G. Residue K444 forms a Glycyl lysine isopeptide (Lys-Gly) (interchain with G-Cter in SUMO2) linkage. Phosphothreonine is present on T456. Residues 460–559 (DYSLLPLLAA…ITVFWKELID (100 aa)) enclose the Tudor; atypical domain. Phosphoserine occurs at positions 487 and 489. K496 participates in a covalent cross-link: Glycyl lysine isopeptide (Lys-Gly) (interchain with G-Cter in SUMO2). Residues 517-520 (SLPA) form a 2-2 repeat. The residue at position 566 (S566) is a Phosphoserine.

Belongs to the coilin family. Interacts with ANKS1B. Interacts with SMN1 (via Tudor domain). Interacts (via C-terminus) with AK6. Interacts with WRAP53/TCAB1. Interacts with HMBOX1. Interacts with PSME3; the interaction is inhibited by PSME3IP1. Interacts wit UBL5. Symmetrical dimethylation of arginine residues within the RG repeat region enhances affinity for SMN, and thus localization of SMN complexes to CBs. Post-translationally, phosphorylated by VRK1. Phosphorylation during mitosis is associated with disassembly of CBs. Found in all the cell types examined.

It is found in the nucleus. The protein localises to the cajal body. Functionally, component of nuclear coiled bodies, also known as Cajal bodies or CBs, which are involved in the modification and assembly of nucleoplasmic snRNPs. The protein is Coilin (COIL) of Homo sapiens (Human).